The sequence spans 75 residues: MKLLLFTALVLVVISLVEVEAENERACIPLEKECTKTPGNCCSGLKCDCYRRFEQGVAKGIQCWCIEKDVTYKGV.

An N-terminal signal peptide occupies residues 1–21 (MKLLLFTALVLVVISLVEVEA). The propeptide occupies 22 to 25 (ENER).

This sequence belongs to the neurotoxin 19 (CSTX) family. 06 (U6-Lctx) subfamily. In terms of processing, contains 4 disulfide bonds. As to expression, expressed by the venom gland.

Its subcellular location is the secreted. The sequence is that of U6-lycotoxin-Ls1d from Lycosa singoriensis (Wolf spider).